Consider the following 29-residue polypeptide: Cyclotide mobo-B (29 aa).

Residues 1 to 29 (GKPICGETCAKGKCYTPKCTCNWPICYKN) constitute a cross-link (cyclopeptide (Gly-Asn)). 3 disulfide bridges follow: cysteine 5/cysteine 19, cysteine 9/cysteine 21, and cysteine 14/cysteine 26.

It belongs to the cyclotide family. Post-translationally, this is a cyclic peptide.

In terms of biological role, probably participates in a plant defense mechanism. In Melicytus obovatus (Hymenanthera obovata), this protein is Cyclotide mobo-B.